The following is a 1050-amino-acid chain: Ankyrin repeat domain-containing protein 27 (1050 aa).

Residues 1–372 (MALYDEDLLK…RQGSLSAKPP (372 aa)) form a sufficient for GEF activity towards RAB21 region. One can recognise a VPS9 domain in the interval 233–371 (ASEDAAFNKI…IRQGSLSAKP (139 aa)). 6 ANK repeats span residues 396–426 (SPTD…DKDT), 462–491 (RGHT…MVNA), 495–524 (HGAT…SAEV), 528–560 (NGNT…RLDI), 564–593 (KGDT…STEI), and 597–627 (LKET…RQKS). The sufficient for interaction with VPS29 stretch occupies residues 396 to 460 (SPTDCLFKHI…PSVVTPFSRD (65 aa)). The interaction with RAB38 stretch occupies residues 451–600 (PSVVTPFSRD…TEIQNRLKET (150 aa)). An interaction with RAB32 region spans residues 451 to 730 (PSVVTPFSRD…APAQKRLAKV (280 aa)). A disordered region spans residues 625 to 665 (QKSSEAPVQSPQRSVDSISQESSTSSFSSMSASSRQEETKK). Residues 628-637 (SEAPVQSPQR) show a composition bias toward polar residues. The segment covering 638-658 (SVDSISQESSTSSFSSMSASS) has biased composition (low complexity). The required for interaction with VAMP7 stretch occupies residues 658–707 (SRQEETKKDYREVEKLLRAVADGDLEMVRYLLEWTEEDLEDAEDTVSAAD). ANK repeat units follow at residues 668–698 (REVE…DLED), 743–772 (DGSS…NAGA), 776–805 (DQAV…KPNK), 809–838 (SGNT…SINA), and 842–871 (KGNT…SVQV). The sufficient for interaction with VPS29 stretch occupies residues 692-746 (TEEDLEDAEDTVSAADPEFCHPLCQCPKCAPAQKRLAKVPASGLGVNVTSQDGSS). Phosphoserine is present on residues Ser-962 and Ser-970. The segment at 987–1050 (PAQSGSHAAE…TPQEVSASRS (64 aa)) is disordered. Over residues 994–1004 (AAEKGNSDWPE) the composition is skewed to basic and acidic residues. Thr-1023 is modified (phosphothreonine). A compositionally biased stretch (polar residues) spans 1040–1050 (STPQEVSASRS).

In terms of assembly, interacts with RAB21 (GDP-bound form), VPS29, RAB32 (GTP-bound form), RAB38 (GTP-bound form), VAMP7, KIF5A, KIF5C, GOLGA4. Interacts with low affinity with RAB5. ANKRD27:RAB32 heterodimers can homodimerize to form tetramers. Can interact with RAB38 or RAB32, VPS29 and VAMP7 simultaneously. A decreased interaction with RAB32 seen in the presence of SGSM2.

The protein resides in the early endosome. Its subcellular location is the late endosome. The protein localises to the cytoplasmic vesicle membrane. It localises to the lysosome. It is found in the cell membrane. The protein resides in the melanosome. Its function is as follows. May be a guanine exchange factor (GEF) for Rab21, Rab32 and Rab38 and regulate endosome dynamics. May regulate the participation of VAMP7 in membrane fusion events; in vitro inhibits VAMP7-mediated SNARE complex formation by trapping VAMP7 in a closed, fusogenically inactive conformation. Involved in peripheral melanosomal distribution of TYRP1 in melanocytes; the function, which probably is implicating vesicle-trafficking, includes cooperation with Rab32, Rab38 and VAMP7. Involved in the regulation of neurite growth; the function seems to require its GEF activity, probably towards Rab21, and VAMP7 but not Rab32/38. Proposed to be involved in Golgi sorting of VAMP7 and transport of VAMP7 vesicles to the cell surface; the function seems to implicate kinesin heavy chain isoform 5 proteins, GOLGA4, RAB21 and MACF1. Required for the colocalization of VAMP7 and Rab21, probably on TGN sites. Involved in GLUT1 endosome-to-plasma membrane trafficking; the function is dependent of association with VPS29. Regulates the proper trafficking of melanogenic enzymes TYR, TYRP1 and DCT/TYRP2 to melanosomes in melanocytes. This is Ankyrin repeat domain-containing protein 27 (ANKRD27) from Homo sapiens (Human).